We begin with the raw amino-acid sequence, 275 residues long: Lectin DB58 (275 aa).

Positions 1–22 (MASSTVSVVLSLFLLLLTQAYS) are cleaved as a signal peptide. Residues asparagine 34 and asparagine 101 are each glycosylated (N-linked (GlcNAc...) asparagine).

This sequence belongs to the leguminous lectin family. In terms of assembly, heterodimer, composed of an alpha and a beta subunit derived from a single precursor. Leu-264 is missing in a major portion of the beta subunit, suggesting an origin by sequential removal of amino acids rather than a processing by endoproteolytic cleavage.

Functionally, metalloglycoprotein, containing Ca, Mg, Mn, and Zn and the carbohydrates galactose, glucosamine, mannose, and fucose. It agglutinates erythrocytes of blood group A1. The protein is Lectin DB58 of Vigna unguiculata subsp. cylindrica (Horse gram).